Reading from the N-terminus, the 542-residue chain is CTP synthase (542 aa).

Residues 1–265 (MTRYIFVTGG…DDFVVERFGL (265 aa)) form an amidoligase domain region. Ser13 serves as a coordination point for CTP. Ser13 is a UTP binding site. ATP contacts are provided by residues 14-19 (SLGKGI) and Asp71. Asp71 and Glu139 together coordinate Mg(2+). CTP-binding positions include 146-148 (DIE), 186-191 (KTKPTQ), and Lys222. Residues 186–191 (KTKPTQ) and Lys222 contribute to the UTP site. One can recognise a Glutamine amidotransferase type-1 domain in the interval 290-541 (TIAMVGKYME…VKAALAQKNK (252 aa)). Position 351 (Gly351) interacts with L-glutamine. The active-site Nucleophile; for glutamine hydrolysis is Cys378. L-glutamine-binding positions include 379-382 (LGMQ), Glu402, and Arg469. Active-site residues include His514 and Glu516.

This sequence belongs to the CTP synthase family. In terms of assembly, homotetramer.

The catalysed reaction is UTP + L-glutamine + ATP + H2O = CTP + L-glutamate + ADP + phosphate + 2 H(+). It catalyses the reaction L-glutamine + H2O = L-glutamate + NH4(+). The enzyme catalyses UTP + NH4(+) + ATP = CTP + ADP + phosphate + 2 H(+). It functions in the pathway pyrimidine metabolism; CTP biosynthesis via de novo pathway; CTP from UDP: step 2/2. With respect to regulation, allosterically activated by GTP, when glutamine is the substrate; GTP has no effect on the reaction when ammonia is the substrate. The allosteric effector GTP functions by stabilizing the protein conformation that binds the tetrahedral intermediate(s) formed during glutamine hydrolysis. Inhibited by the product CTP, via allosteric rather than competitive inhibition. Catalyzes the ATP-dependent amination of UTP to CTP with either L-glutamine or ammonia as the source of nitrogen. Regulates intracellular CTP levels through interactions with the four ribonucleotide triphosphates. In Pseudomonas putida (strain GB-1), this protein is CTP synthase.